A 297-amino-acid chain; its full sequence is HTH-type transcriptional regulator AceR (297 aa).

Residues M1–T60 enclose the HTH lysR-type domain. Residues F20–A39 constitute a DNA-binding region (H-T-H motif).

It belongs to the LysR transcriptional regulatory family. As to quaternary structure, homodimer and homotetramer. Binding of chlorhexidine at the inducer-binding domain causes a quaternary structural change that favors interactions between dimers to form tetramers.

It is found in the cytoplasm. Its function is as follows. Regulates the expression of the AceI transporter. Binds DNA and chlorhexidine. Binds to regulatory sites within the intergenic region between the aceI and aceR genes, and affects the interaction between RNA polymerase (RNAP) and promoter DNA both in the presence and in the absence of chlorhexidine. In the absence of chlorhexidine, prevents transcription of the aceI gene by disrupting interactions between the promoter DNA and RNAP. In the presence of chlorhexidine, activates expression of aceI. When AceR interacts with chlorhexidine, it undergoes a conformational change and the tetrameric form either releases the DNA or shifts the position of the DNA-binding region to allow RNAP to bind onto the promoter DNA to proceed with aceI transcription. The protein is HTH-type transcriptional regulator AceR of Acinetobacter baumannii (strain ATCC 17978 / DSM 105126 / CIP 53.77 / LMG 1025 / NCDC KC755 / 5377).